Reading from the N-terminus, the 417-residue chain is Tryptophan decarboxylase (417 aa).

Residue Lys-263 is modified to N6-(pyridoxal phosphate)lysine.

The protein belongs to the group II decarboxylase family. Pyridoxal 5'-phosphate serves as cofactor.

It is found in the cytoplasm. The catalysed reaction is L-tryptophan + H(+) = tryptamine + CO2. Its activity is regulated as follows. Inhibited by (S)-alpha-fluoromethyltryptophan. Functionally, catalyzes the decarboxylation of tryptophan to tryptamine. Tryptamine is a neurotransmitter that induces the release of serotonin, which is suggested to modulate gastrointestinal motility. Therefore, the tryptophan decarboxylase from the gut bacteria Clostridium sporogenes (strain ATCC 15579) may influence host brain and behavior. Has weak activity with tyrosine. Activity against phenylalanine is undetectable. The sequence is that of Tryptophan decarboxylase from Clostridium sporogenes (strain ATCC 15579).